The chain runs to 526 residues: Bifunctional purine biosynthesis protein PurH (526 aa).

Residues 15-161 enclose the MGS-like domain; that stretch reads DVVPIRRALI…KNHANVAIVV (147 aa).

It belongs to the PurH family.

The catalysed reaction is (6R)-10-formyltetrahydrofolate + 5-amino-1-(5-phospho-beta-D-ribosyl)imidazole-4-carboxamide = 5-formamido-1-(5-phospho-D-ribosyl)imidazole-4-carboxamide + (6S)-5,6,7,8-tetrahydrofolate. The enzyme catalyses IMP + H2O = 5-formamido-1-(5-phospho-D-ribosyl)imidazole-4-carboxamide. The protein operates within purine metabolism; IMP biosynthesis via de novo pathway; 5-formamido-1-(5-phospho-D-ribosyl)imidazole-4-carboxamide from 5-amino-1-(5-phospho-D-ribosyl)imidazole-4-carboxamide (10-formyl THF route): step 1/1. It functions in the pathway purine metabolism; IMP biosynthesis via de novo pathway; IMP from 5-formamido-1-(5-phospho-D-ribosyl)imidazole-4-carboxamide: step 1/1. This Leifsonia xyli subsp. xyli (strain CTCB07) protein is Bifunctional purine biosynthesis protein PurH.